The chain runs to 2207 residues: DNA polymerase epsilon catalytic subunit A (2207 aa).

Disordered stretches follow at residues 1 to 20 (MPSRKPSKYGNKFRSGAASF), 1201 to 1233 (SMEKLKSSSPQKASGKRKHPENQTKTSLDPFAS), and 1934 to 1961 (RPESDDSSTPRLTQIPIGQPEPGQENEE). 4 residues coordinate Zn(2+): Cys-2075, Cys-2078, Cys-2113, and Cys-2116. The segment at 2075–2116 (CSACCLIRDLDLCRDEDVLPERGSGSGPDSATSSRPWCCPFC) adopts a CysA-type zinc-finger fold. 4 residues coordinate [4Fe-4S] cluster: Cys-2147, Cys-2150, Cys-2162, and Cys-2164. The CysB motif signature appears at 2147–2164 (CSKCGTLKISEFMEHCSC).

The protein belongs to the DNA polymerase type-B family. Heterotetramer. Consists of 4 subunits: pol2, dpb2, dpb3 and dpb4. [4Fe-4S] cluster is required as a cofactor.

It localises to the nucleus. It carries out the reaction DNA(n) + a 2'-deoxyribonucleoside 5'-triphosphate = DNA(n+1) + diphosphate. Its function is as follows. DNA polymerase II participates in chromosomal DNA replication. In Emericella nidulans (strain FGSC A4 / ATCC 38163 / CBS 112.46 / NRRL 194 / M139) (Aspergillus nidulans), this protein is DNA polymerase epsilon catalytic subunit A (pol2).